A 223-amino-acid chain; its full sequence is Urease accessory protein UreG (223 aa).

Residues 1-30 form a disordered region; sequence MAKHSHDHTHDHHDRPRRVRKPGEPLRIGV. A GTP-binding site is contributed by 32-39; that stretch reads GPVGSGKT.

Belongs to the SIMIBI class G3E GTPase family. UreG subfamily. As to quaternary structure, homodimer. UreD, UreF and UreG form a complex that acts as a GTP-hydrolysis-dependent molecular chaperone, activating the urease apoprotein by helping to assemble the nickel containing metallocenter of UreC. The UreE protein probably delivers the nickel.

Its subcellular location is the cytoplasm. Functionally, facilitates the functional incorporation of the urease nickel metallocenter. This process requires GTP hydrolysis, probably effectuated by UreG. The chain is Urease accessory protein UreG from Mycobacterium ulcerans (strain Agy99).